A 225-amino-acid polypeptide reads, in one-letter code: MNSIKFPVLDRTTKNSVISTTLNDLSNWSRLSSLWPLLYGTSCCFIEFASLIGSRFDFDRYGLVPRSSPRQADLILTAGTVTMKMAPSLVRLYEQMPEPKYVIAMGACTITGGMFSTDSYSTVRGVDKLIPVDVYLPGCPPKPEAVIDAITKLRKKIAREIYKDRIRPQQGNRCFTTNHKFFVVRSPHTGNYDQELLYPPSSTSEISTETFFKYKSPVSSHELVN.

Residues Cys-43, Cys-44, Cys-108, and Cys-139 each contribute to the [4Fe-4S] cluster site.

Belongs to the complex I 20 kDa subunit family. NDH is composed of at least 16 different subunits, 5 of which are encoded in the nucleus. [4Fe-4S] cluster serves as cofactor.

It is found in the plastid. The protein localises to the chloroplast thylakoid membrane. The catalysed reaction is a plastoquinone + NADH + (n+1) H(+)(in) = a plastoquinol + NAD(+) + n H(+)(out). The enzyme catalyses a plastoquinone + NADPH + (n+1) H(+)(in) = a plastoquinol + NADP(+) + n H(+)(out). Its function is as follows. NDH shuttles electrons from NAD(P)H:plastoquinone, via FMN and iron-sulfur (Fe-S) centers, to quinones in the photosynthetic chain and possibly in a chloroplast respiratory chain. The immediate electron acceptor for the enzyme in this species is believed to be plastoquinone. Couples the redox reaction to proton translocation, and thus conserves the redox energy in a proton gradient. The polypeptide is NAD(P)H-quinone oxidoreductase subunit K, chloroplastic (Olimarabidopsis pumila (Dwarf rocket)).